The sequence spans 304 residues: tRNA dimethylallyltransferase (304 aa).

ATP is bound at residue Gly-2–Thr-9. Substrate is bound at residue Thr-4–Thr-9. Interaction with substrate tRNA regions lie at residues Asp-27–Leu-30, Gln-151–Arg-155, Arg-232–Arg-237, and Lys-265–Arg-272.

The protein belongs to the IPP transferase family. As to quaternary structure, monomer. Mg(2+) serves as cofactor.

It carries out the reaction adenosine(37) in tRNA + dimethylallyl diphosphate = N(6)-dimethylallyladenosine(37) in tRNA + diphosphate. Its function is as follows. Catalyzes the transfer of a dimethylallyl group onto the adenine at position 37 in tRNAs that read codons beginning with uridine, leading to the formation of N6-(dimethylallyl)adenosine (i(6)A). In Actinobacillus pleuropneumoniae serotype 7 (strain AP76), this protein is tRNA dimethylallyltransferase.